The following is a 236-amino-acid chain: Truncated formate dehydrogenase 2 (236 aa).

Residues 36–37 (RI), aspartate 57, 104–108 (PLHKD), threonine 130, aspartate 156, and 185–188 (HISG) contribute to the NAD(+) site.

Belongs to the D-isomer specific 2-hydroxyacid dehydrogenase family. FDH subfamily.

In Saccharomyces cerevisiae (strain ATCC 204508 / S288c) (Baker's yeast), this protein is Truncated formate dehydrogenase 2.